Here is a 404-residue protein sequence, read N- to C-terminus: SAC3 domain-containing protein 1 (404 aa).

2 disordered regions span residues 1–58 (MAGR…GTCP) and 77–117 (RLEV…QLRP). Over residues 12–21 (PPRPAAPHPR) the composition is skewed to pro residues. The segment covering 87-101 (DPPRADPQRAVKEYS) has biased composition (basic and acidic residues). One can recognise a PCI domain in the interval 203 to 379 (QVQEGFGSLR…TCKVLVESKL (177 aa)). Serine 402 is subject to Phosphoserine.

The protein belongs to the SAC3 family. As to quaternary structure, may be part of a SEM1-containing complex.

The protein resides in the cytoplasm. It localises to the cytoskeleton. The protein localises to the microtubule organizing center. It is found in the centrosome. Its subcellular location is the spindle. In terms of biological role, involved in centrosome duplication and mitotic progression. The chain is SAC3 domain-containing protein 1 (SAC3D1) from Homo sapiens (Human).